The primary structure comprises 398 residues: uncharacterized protein (398 aa).

This is an uncharacterized protein from Bacillus subtilis (strain 168).